A 558-amino-acid polypeptide reads, in one-letter code: Glucose-6-phosphate isomerase (558 aa).

Ala-2 carries the post-translational modification N-acetylalanine. Position 12 is an N6-acetyllysine (Lys-12). The residue at position 34 (Lys-34) is an N6-(2-hydroxyisobutyryl)lysine. Ser-107 bears the Phosphoserine mark. Phosphothreonine is present on Thr-109. At Lys-142 the chain carries N6-acetyllysine. 159–160 is a binding site for D-glucose 6-phosphate; that stretch reads GS. Ser-185 is subject to Phosphoserine; by CK2. D-glucose 6-phosphate is bound at residue 210-215; sequence SKTFTT. Position 250 is a phosphothreonine (Thr-250). Residues Gln-354, Glu-358, and His-389 each contribute to the D-glucose 6-phosphate site. Catalysis depends on Glu-358, which acts as the Proton donor. His-389 is an active-site residue. Lys-454 carries the N6-acetyllysine; alternate modification. Residue Lys-454 is modified to N6-malonyllysine; alternate. An N6-succinyllysine; alternate modification is found at Lys-454. Ser-455 carries the phosphoserine modification. Lys-519 contacts D-glucose 6-phosphate. Lys-519 is a catalytic residue.

This sequence belongs to the GPI family. As to quaternary structure, homodimer; in the catalytically active form. Monomer in the secreted form. Phosphorylation at Ser-185 by CK2 has been shown to decrease enzymatic activity and may contribute to secretion by a non-classical secretory pathway. Post-translationally, ISGylated.

The protein resides in the cytoplasm. The protein localises to the secreted. The catalysed reaction is alpha-D-glucose 6-phosphate = beta-D-fructose 6-phosphate. Its pathway is carbohydrate degradation; glycolysis; D-glyceraldehyde 3-phosphate and glycerone phosphate from D-glucose: step 2/4. Strongly inhibited by erythrose 4-phosphate. Functionally, in the cytoplasm, catalyzes the conversion of glucose-6-phosphate to fructose-6-phosphate, the second step in glycolysis, and the reverse reaction during gluconeogenesis. Besides it's role as a glycolytic enzyme, also acts as a secreted cytokine: acts as an angiogenic factor (AMF) that stimulates endothelial cell motility. Acts as a neurotrophic factor, neuroleukin, for spinal and sensory neurons. It is secreted by lectin-stimulated T-cells and induces immunoglobulin secretion. The protein is Glucose-6-phosphate isomerase of Homo sapiens (Human).